An 84-amino-acid chain; its full sequence is MYB-like transcription factor TCL1 (84 aa).

Residues Thr-36 to Trp-73 form the Myb-like domain.

As to expression, expressed in inflorescences and trichomes of rosette and cauline leaves.

Its subcellular location is the nucleus. In terms of biological role, MYB-type transcription factor involved in trichome cell specification. Acts as a negative regulator of trichome patterning and formation by direct binding to the cis-acting regulatory elements of GL1, thus suppressing the expression of GL1. This chain is MYB-like transcription factor TCL1 (TCL1), found in Arabidopsis thaliana (Mouse-ear cress).